Consider the following 120-residue polypeptide: Ribosome-binding factor A (120 aa).

The protein belongs to the RbfA family. In terms of assembly, monomer. Binds 30S ribosomal subunits, but not 50S ribosomal subunits or 70S ribosomes.

It is found in the cytoplasm. Its function is as follows. One of several proteins that assist in the late maturation steps of the functional core of the 30S ribosomal subunit. Associates with free 30S ribosomal subunits (but not with 30S subunits that are part of 70S ribosomes or polysomes). Required for efficient processing of 16S rRNA. May interact with the 5'-terminal helix region of 16S rRNA. The polypeptide is Ribosome-binding factor A (Chlorobaculum tepidum (strain ATCC 49652 / DSM 12025 / NBRC 103806 / TLS) (Chlorobium tepidum)).